Reading from the N-terminus, the 506-residue chain is Zinc finger protein 157 (506 aa).

Positions 27-98 (VSFEDVAVDF…EEESSGHGYS (72 aa)) constitute a KRAB domain. C2H2-type zinc fingers lie at residues 162–184 (FECH…LRIH), 190–212 (YECG…QKTH), 218–240 (FECN…TRTH), 246–268 (YECT…QRTH), 274–296 (YECS…HRTH), 302–324 (YECG…QRIH), 330–352 (YECG…QRTH), 358–380 (YQCN…QRIH), 386–408 (YECN…QRMH), 414–436 (YECS…RRTH), 442–464 (YECS…QRIH), and 470–492 (FECQ…QRTH).

It belongs to the krueppel C2H2-type zinc-finger protein family.

It localises to the nucleus. May be involved in transcriptional regulation. The chain is Zinc finger protein 157 (ZNF157) from Homo sapiens (Human).